The sequence spans 278 residues: Probable cytochrome c oxidase subunit 3 (278 aa).

6 helical membrane-spanning segments follow: residues 21–41 (PWPVLTSFALLLLVIGGVSFM), 46–66 (FNIYILSAGVISVGYCLYSWW), 89–109 (IGMALFILTEIVFFGVFFASF), 174–194 (CVTALALTILLGIFFTTMQAY), 212–232 (FYLATGFHGAHVIIGTIFLIV), and 256–276 (AWYWHFVDVVWLFLFTFVYIF).

The protein belongs to the cytochrome c oxidase subunit 3 family.

It is found in the cell membrane. The enzyme catalyses 4 Fe(II)-[cytochrome c] + O2 + 8 H(+)(in) = 4 Fe(III)-[cytochrome c] + 2 H2O + 4 H(+)(out). This is Probable cytochrome c oxidase subunit 3 (ctaE) from Rickettsia felis (strain ATCC VR-1525 / URRWXCal2) (Rickettsia azadi).